We begin with the raw amino-acid sequence, 810 residues long: Venom phosphodiesterase 2 (810 aa).

An N-terminal signal peptide occupies residues 1–23 (MIQQKVLFISLVAVTLGLGLGLG). An SMB domain is found at 33 to 77 (QSWSCSKLRCGEKRIANVLCSCSDDCLEKKDCCTDYKSICKGETS). 9 disulfide bridges follow: C37–C42, C37–C54, C42–C72, C52–C54, C52–C65, C58–C64, C65–C72, C83–C129, and C91–C303. The a divalent metal cation site is built by D106 and T144. The active-site AMP-threonine intermediate is the T144. N175, N218, and N229 each carry an N-linked (GlcNAc...) asparagine glycan. K230 provides a ligand contact to AMP. Residues D264, H268, D311, and H312 each coordinate a divalent metal cation. H268 provides a ligand contact to AMP. Intrachain disulfides connect C319-C416, C367-C752, C500-C558, C513-C613, C515-C598, and C721-C731. A glycan (N-linked (GlcNAc...) asparagine) is linked at N364. A divalent metal cation is bound at residue H421. Residues N471, N553, N633, and N704 are each glycosylated (N-linked (GlcNAc...) asparagine).

The protein belongs to the nucleotide pyrophosphatase/phosphodiesterase family. In terms of assembly, monomer cleaved in two subunits; disulfide-linked. Is synthesized as a single-chain protein and is subsequently cleaved to form a two-subunit protein held together with disulfide bonds. Requires a divalent metal cation as cofactor. In terms of tissue distribution, expressed by venom gland.

It is found in the secreted. It catalyses the reaction ADP + H2O = AMP + phosphate + H(+). Hydrolyzes ADP with high activity. Shows weak or no activity on 5'-AMP, 5'-GMP, 3'-AMP, ATP, cAMP, and cGMP. Is devoid of monophosphatase and proteinase activities. Dose-dependently inhibits platelet aggregation induced by ADP (IC(50)=0.99 uM) and collagen (IC(50)=1.4 uM). In Crotalus adamanteus (Eastern diamondback rattlesnake), this protein is Venom phosphodiesterase 2.